Reading from the N-terminus, the 554-residue chain is Glucose-6-phosphate isomerase (554 aa).

Glu359 (proton donor) is an active-site residue. Active-site residues include His390 and Lys518.

The protein belongs to the GPI family.

It is found in the cytoplasm. The enzyme catalyses alpha-D-glucose 6-phosphate = beta-D-fructose 6-phosphate. The protein operates within carbohydrate biosynthesis; gluconeogenesis. Its pathway is carbohydrate degradation; glycolysis; D-glyceraldehyde 3-phosphate and glycerone phosphate from D-glucose: step 2/4. Functionally, catalyzes the reversible isomerization of glucose-6-phosphate to fructose-6-phosphate. The sequence is that of Glucose-6-phosphate isomerase from Pseudomonas putida (strain GB-1).